A 520-amino-acid chain; its full sequence is Beta-2-syntrophin (520 aa).

A disordered region spans residues 45–95 (EPPAAAFNGLPNGGGGESLPGSPNRGLGPPSPPAPPRGPAGEASASPPVRR). Residues 63–72 (LPGSPNRGLG) show a composition bias toward low complexity. Over residues 73–82 (PPSPPAPPRG) the composition is skewed to pro residues. S75, S90, S109, S191, S202, S213, S373, and S375 each carry phosphoserine. A compositionally biased stretch (low complexity) spans 83–93 (PAGEASASPPV). The 84-residue stretch at 95–178 (RVRVVKQEAG…EVLLEVKFIR (84 aa)) folds into the PDZ domain. PH domains follow at residues 143–280 (ILSV…TNIM) and 305–417 (EVKH…QGCH). The segment at 195 to 220 (WEGASPQSPSFSGSEDSGSPKHQNTT) is disordered. Residues 197–211 (GASPQSPSFSGSEDS) are compositionally biased toward low complexity. Residues 464–520 (PFERLKMSADDGIRNLYLDFGGPEGELTMDLHSCPKPIVFVLHTFLSAKVTRMGLLV) enclose the SU domain. Positions 498-520 (PKPIVFVLHTFLSAKVTRMGLLV) are calmodulin-binding.

The protein belongs to the syntrophin family. Monomer and homodimer. Interacts with the dystrophin protein DMD and related protein DTNA; and with the other members of the syntrophin family: SNTA1 and SNTB1. Interacts with the neuroregulin receptor ERBB4. Interacts with PTPRN when phosphorylated, protecting PTPRN from protein cleavage by CAPN1. Dephosphorylation upon insulin stimulation disrupts the interaction with PTPRN and results in the cleavage of PTPRN. Interacts with the sodium channel proteins SCN4A and SCN5A. Interacts with SAST, MAST205, microtubules and microtubule-associated proteins. Interacts with the dystrophin related protein UTRN. Interacts with DTNB. Phosphorylated. Partially dephosphorylated upon insulin stimulation. As to expression, ubiquitous. Expressed at high levels in the testis.

Its subcellular location is the membrane. It is found in the cytoplasmic vesicle. The protein localises to the secretory vesicle membrane. It localises to the cell junction. The protein resides in the cytoplasm. Its subcellular location is the cytoskeleton. Its function is as follows. Adapter protein that binds to and probably organizes the subcellular localization of a variety of membrane proteins. May link various receptors to the actin cytoskeleton and the dystrophin glycoprotein complex. May play a role in the regulation of secretory granules via its interaction with PTPRN. The sequence is that of Beta-2-syntrophin (Sntb2) from Mus musculus (Mouse).